The following is a 592-amino-acid chain: Potassium-transporting ATPase potassium-binding subunit (592 aa).

The next 11 helical transmembrane spans lie at 7–27 (LQTV…GTFM), 71–91 (VLFN…QHLL), 136–156 (GLTV…IAVI), 179–199 (LYIL…QGVI), 287–307 (LEIL…GAMV), 314–334 (WTLL…LQGV), 411–431 (GLYT…LMIG), 449–469 (SVVT…IAMI), 473–493 (AVAA…YAFA), 515–535 (ILGA…VLAM), and 559–579 (FALW…FPAL).

The protein belongs to the KdpA family. As to quaternary structure, the system is composed of three essential subunits: KdpA, KdpB and KdpC.

The protein resides in the cell inner membrane. Its function is as follows. Part of the high-affinity ATP-driven potassium transport (or Kdp) system, which catalyzes the hydrolysis of ATP coupled with the electrogenic transport of potassium into the cytoplasm. This subunit binds the periplasmic potassium ions and delivers the ions to the membrane domain of KdpB through an intramembrane tunnel. This Geobacter sulfurreducens (strain ATCC 51573 / DSM 12127 / PCA) protein is Potassium-transporting ATPase potassium-binding subunit.